A 153-amino-acid chain; its full sequence is Deoxyuridine 5'-triphosphate nucleotidohydrolase (153 aa).

DUMP is bound by residues Ser75, Gly88, Asp91, Tyr94, Lys99, Arg143, Phe148, and Gly149.

Belongs to the dUTPase family. As to quaternary structure, homotrimer. Mg(2+) is required as a cofactor.

It catalyses the reaction dUTP + H2O = dUMP + diphosphate + H(+). Its pathway is pyrimidine metabolism; dUMP biosynthesis; dUMP from dCTP (dUTP route): step 2/2. Its function is as follows. Involved in nucleotide metabolism via production of dUMP, the immediate precursor of thymidine nucleotides, and decreases the intracellular concentration of dUTP so that uracil cannot be incorporated into DNA. The polypeptide is Deoxyuridine 5'-triphosphate nucleotidohydrolase (DUT1) (Eremothecium gossypii (strain ATCC 10895 / CBS 109.51 / FGSC 9923 / NRRL Y-1056) (Yeast)).